The primary structure comprises 57 residues: UPF0391 membrane protein NE0130 (57 aa).

The next 2 helical transmembrane spans lie at 1-21 and 33-53; these read MLKW…FGFR and FLFF…LLGI.

Belongs to the UPF0391 family.

Its subcellular location is the cell membrane. This is UPF0391 membrane protein NE0130 from Nitrosomonas europaea (strain ATCC 19718 / CIP 103999 / KCTC 2705 / NBRC 14298).